A 255-amino-acid polypeptide reads, in one-letter code: tRNA pseudouridine synthase A (255 aa).

Aspartate 43 serves as the catalytic Nucleophile. Tyrosine 94 contributes to the substrate binding site.

The protein belongs to the tRNA pseudouridine synthase TruA family.

The enzyme catalyses uridine(38/39/40) in tRNA = pseudouridine(38/39/40) in tRNA. Formation of pseudouridine at positions 38, 39 and 40 in the anticodon stem and loop of transfer RNAs. This is tRNA pseudouridine synthase A from Pyrobaculum neutrophilum (strain DSM 2338 / JCM 9278 / NBRC 100436 / V24Sta) (Thermoproteus neutrophilus).